Here is a 688-residue protein sequence, read N- to C-terminus: Glycine--tRNA ligase beta subunit (688 aa).

The protein belongs to the class-II aminoacyl-tRNA synthetase family. As to quaternary structure, tetramer of two alpha and two beta subunits.

It localises to the cytoplasm. It carries out the reaction tRNA(Gly) + glycine + ATP = glycyl-tRNA(Gly) + AMP + diphosphate. The polypeptide is Glycine--tRNA ligase beta subunit (Histophilus somni (strain 129Pt) (Haemophilus somnus)).